Here is a 327-residue protein sequence, read N- to C-terminus: Zinc transport protein ZntB (327 aa).

Over 1 to 273 the chain is Cytoplasmic; it reads MEAIKGSDVN…ARRTYTMSLM (273 aa). A helical membrane pass occupies residues 274–294; sequence AMVFLPSTFLTGLFGVNLGGI. Residues 295–300 are Periplasmic-facing; that stretch reads PGGGWR. Residues 301–321 form a helical membrane-spanning segment; it reads FGFSLFCILLVVLIGGVTLWL. Topologically, residues 322–327 are cytoplasmic; it reads HRSKWL.

The protein belongs to the CorA metal ion transporter (MIT) (TC 1.A.35) family.

It localises to the cell inner membrane. The enzyme catalyses Zn(2+)(out) + H(+)(out) = Zn(2+)(in) + H(+)(in). Its function is as follows. Zinc transporter. Acts as a Zn(2+):proton symporter, which likely mediates zinc ion uptake. The polypeptide is Zinc transport protein ZntB (Salmonella agona (strain SL483)).